Here is a 2682-residue protein sequence, read N- to C-terminus: 3-methylorcinaldehyde synthase (2682 aa).

The tract at residues 111–272 is N-terminal acylcarrier protein transacylase domain (SAT); sequence LIPLVVIEQL…TEITLYGAFH (162 aa). The Nucleophile; for transacylase activity role is filled by Cys154. The Proton donor/acceptor; for transacylase activity role is filled by His272. The Ketosynthase family 3 (KS3) domain occupies 401–826; sequence ESDIAVIGMA…GSNASMIVMQ (426 aa). Residues Cys573, His708, and His749 each act as for beta-ketoacyl synthase activity in the active site. Residues 947 to 1237 form a malonyl-CoA:ACP transacylase (MAT) domain region; the sequence is FGGQVSTHIG…ITAMTSRALD (291 aa). The interval 1339–1468 is N-terminal hotdog fold; that stretch reads LTFVGFQDSS…GKIKFTNARD (130 aa). One can recognise a PKS/mFAS DH domain in the interval 1339–1651; the sequence is LTFVGFQDSS…YVKIPKLSMQ (313 aa). Residues 1367-1649 form a product template (PT) domain region; that stretch reads LLLGHMTIQT…IAYVKIPKLS (283 aa). His1371 functions as the Proton acceptor; for dehydratase activity in the catalytic mechanism. The C-terminal hotdog fold stretch occupies residues 1496–1651; sequence VDEVLANRSI…YVKIPKLSMQ (156 aa). Asp1555 functions as the Proton donor; for dehydratase activity in the catalytic mechanism. The region spanning 1723–1797 is the Carrier domain; the sequence is ENITERVKAV…DLMKVVTGVV (75 aa). Position 1757 is an O-(pantetheine 4'-phosphoryl)serine (Ser1757). The methyltransferase domain stretch occupies residues 2021 to 2211; sequence EWPLNQVMYT…AGYGHVYWTE (191 aa). The tract at residues 2303–2548 is NADPH-binding (R) domain; it reads VTGATGGLGA…LGWTPADAIA (246 aa).

Its pathway is secondary metabolite biosynthesis; terpenoid biosynthesis. Non-reducing polyketide synthase; part of the gene cluster that mediates the biosynthesis of eupenifeldin, a bistropolone meroterpenoid that acts as an antitumor agent. The first step of eupenifeldin biosynthesis is the biosynthesis of 3-methylorcinaldehyde performed by the non-reducing polyketide synthase eupA. Oxidative dearomatization of 3-methylorcinaldehyde likely catalyzed by the FAD-dependent monooxygenase eupB is followed by oxidative ring expansion by the 2-oxoglutarate-dependent dioxygenase eupC to provide the first tropolone metabolite, tropolone stipitaldehyde. In parallel, generation of sesquiterpene alpha-humulene from farnesylpyrophosphate (FPP) is catalyzed by the terpene cyclase eupE. The cytochrome P450 monooxygenase eupD then hydroxylates humulene to humulenol. The putative Diels-Alderase eupF probably catalyzes the formation of the tropolone-humulene skeleton by linking humulenol and the polyketide moiety. The short-chain dehydrogenase/reductase eupG and the flavin-dependent monooxygenase eupH are also essential for eupenifeldin biosynthesis and are likely the additional decorating enzymes of the tropolone-humulene skeleton to produce final eupenifeldin or derivatives. This is 3-methylorcinaldehyde synthase from Phoma sp.